Consider the following 591-residue polypeptide: Uncoordinated protein 58 (591 aa).

The segment at 1-24 (MFFYSPNVAPQPSSTSHRRPTLTH) is disordered. A helical transmembrane segment spans residues 184–204 (VILVSVLIGYLCLGAWILMLL). Residue asparagine 226 is glycosylated (N-linked (GlcNAc...) asparagine). A run of 5 helical transmembrane segments spans residues 289–309 (TFPTAILYVLTVLTTCGYGEV), 318–338 (VFSVAFALVGIPLMFITAADI), 400–420 (PIGAYVSCICIYCSIGSAMFI), 428–448 (FIHAFHFGFNLIVTVGLGDIV), and 453–473 (IFLSLIVAFVIVGLSVVTMCV).

It belongs to the two pore domain potassium channel (TC 1.A.1.8) family.

It is found in the membrane. Its function is as follows. Has a role in mobility, possibly in the transport of potassium in muscles. This chain is Uncoordinated protein 58, found in Caenorhabditis elegans.